A 322-amino-acid chain; its full sequence is Malate dehydrogenase (322 aa).

Residues 10 to 15 and Asp34 contribute to the NAD(+) site; that span reads GSGQIG. Substrate contacts are provided by Arg83 and Arg89. NAD(+) contacts are provided by residues Asn96 and 119-121; that span reads ITN. Positions 121 and 152 each coordinate substrate. His176 (proton acceptor) is an active-site residue.

This sequence belongs to the LDH/MDH superfamily. MDH type 3 family.

It carries out the reaction (S)-malate + NAD(+) = oxaloacetate + NADH + H(+). Catalyzes the reversible oxidation of malate to oxaloacetate. The protein is Malate dehydrogenase of Bradyrhizobium diazoefficiens (strain JCM 10833 / BCRC 13528 / IAM 13628 / NBRC 14792 / USDA 110).